A 492-amino-acid chain; its full sequence is MTLWINGDWITGQGASRVKRNPVSGEVLWQGNDADAAQVGQACRAARAAFPRWARLSLAERQVVVERFAGLLERNKGELTAIIARETGKPRWEAATEVTAMINKIAISIKAYHVRTGEQRSEMPDGAASLRHRPHGVLAVFGPYNFPGHLPNGHIVPALLAGNTIIFKPSELTPWSGEAVMRLWQQAGLPPGVLNLVQGGRETGQALSALEDLDGLLFTGSANTGYQLHRQLSGQPEKILALEMGGNNPLIIDEVADIDAAVHLTIQSAFVTAGQRCTCARRLLLKSGAQGDAFLARLVAVSQRLTPGNWDDEPQPFIGGLISEQAAQQVVTAWQQLEAMGGRTLLAPRLLQSETSLLTPGIIEMTGVAGVPDEEVFGPLLRVWRYDSFEEAILMANNTRFGLSCGLVSPEREKFDQLLLEARAGIVNWNKPLTGAASTAPFGGIGASGNHRPSAWYAADYCAWPMASLESDSLTLPATLNPGLDFSDEVVR.

220-225 serves as a coordination point for NAD(+); the sequence is GSANTG. Active-site residues include Glu-243 and Cys-277.

Belongs to the aldehyde dehydrogenase family. AstD subfamily.

The enzyme catalyses N-succinyl-L-glutamate 5-semialdehyde + NAD(+) + H2O = N-succinyl-L-glutamate + NADH + 2 H(+). It participates in amino-acid degradation; L-arginine degradation via AST pathway; L-glutamate and succinate from L-arginine: step 4/5. In terms of biological role, catalyzes the NAD-dependent reduction of succinylglutamate semialdehyde into succinylglutamate. The sequence is that of N-succinylglutamate 5-semialdehyde dehydrogenase from Escherichia coli O139:H28 (strain E24377A / ETEC).